The sequence spans 417 residues: NADH-quinone oxidoreductase subunit D (417 aa).

Belongs to the complex I 49 kDa subunit family. As to quaternary structure, NDH-1 is composed of 14 different subunits. Subunits NuoB, C, D, E, F, and G constitute the peripheral sector of the complex.

The protein localises to the cell inner membrane. It catalyses the reaction a quinone + NADH + 5 H(+)(in) = a quinol + NAD(+) + 4 H(+)(out). In terms of biological role, NDH-1 shuttles electrons from NADH, via FMN and iron-sulfur (Fe-S) centers, to quinones in the respiratory chain. The immediate electron acceptor for the enzyme in this species is believed to be ubiquinone. Couples the redox reaction to proton translocation (for every two electrons transferred, four hydrogen ions are translocated across the cytoplasmic membrane), and thus conserves the redox energy in a proton gradient. The polypeptide is NADH-quinone oxidoreductase subunit D (Burkholderia lata (strain ATCC 17760 / DSM 23089 / LMG 22485 / NCIMB 9086 / R18194 / 383)).